The following is a 348-amino-acid chain: Zinc finger and SCAN domain-containing protein 16 (348 aa).

The 83-residue stretch at 41-123 (RQHFRKLCYQ…TVLEDLEREL (83 aa)) folds into the SCAN box domain. Disordered stretches follow at residues 160–184 (PKKT…TKNE) and 205–226 (RLNK…EGRS). The segment covering 163–184 (TQLEQEAGKPQRNGDKTRTKNE) has biased composition (basic and acidic residues). 4 C2H2-type zinc fingers span residues 236–258 (YKCD…RRTH), 264–286 (YKCD…HRVH), 292–314 (YKCK…QRIH), and 320–342 (YECD…QRIH).

This sequence belongs to the krueppel C2H2-type zinc-finger protein family.

The protein resides in the nucleus. In terms of biological role, may be involved in transcriptional regulation. The polypeptide is Zinc finger and SCAN domain-containing protein 16 (ZSCAN16) (Homo sapiens (Human)).